A 281-amino-acid chain; its full sequence is Diaminopimelate epimerase (281 aa).

Substrate contacts are provided by Asn13 and Asn66. The active-site Proton donor is the Cys75. Substrate-binding positions include 76 to 77, Asn164, Asn197, and 215 to 216; these read GN and ER. The active-site Proton acceptor is Cys224. 225-226 contributes to the substrate binding site; sequence GT.

It belongs to the diaminopimelate epimerase family. In terms of assembly, homodimer.

The protein resides in the cytoplasm. The catalysed reaction is (2S,6S)-2,6-diaminopimelate = meso-2,6-diaminopimelate. The protein operates within amino-acid biosynthesis; L-lysine biosynthesis via DAP pathway; DL-2,6-diaminopimelate from LL-2,6-diaminopimelate: step 1/1. In terms of biological role, catalyzes the stereoinversion of LL-2,6-diaminopimelate (L,L-DAP) to meso-diaminopimelate (meso-DAP), a precursor of L-lysine and an essential component of the bacterial peptidoglycan. In Microcystis aeruginosa (strain NIES-843 / IAM M-2473), this protein is Diaminopimelate epimerase.